The chain runs to 1179 residues: Protein FAM83H (1179 aa).

The DUF1669 stretch occupies residues 1 to 286 (MARRSQSSSQ…LFAQSEPLVP (286 aa)). Residues 1-286 (MARRSQSSSQ…LFAQSEPLVP (286 aa)) form a mediates interaction with CSNK1A1 and is required for FAM83H activity in keratin cytoskeleton organization region. At threonine 465 the chain carries Phosphothreonine. 2 disordered regions span residues 484 to 577 (ADPD…GRAG) and 636 to 669 (FPTKVPVPGPGSGGNGPEREGPEEPGLAKQDSFR). Phosphoserine is present on residues serine 513, serine 514, serine 516, serine 523, serine 647, and serine 667. Threonine 756 is modified (phosphothreonine). Phosphoserine is present on residues serine 759, serine 785, and serine 813. The disordered stretch occupies residues 830 to 1026 (RLPSRFLSAQ…RGPRARLSSA (197 aa)). Residues 836–847 (LSAQSHSTSPQG) show a composition bias toward polar residues. Phosphoserine is present on residues serine 870 and serine 881. Threonine 883 is modified (phosphothreonine). Polar residues predominate over residues 884–906 (PGFSTRRGSPTTGFIEQKGSPTS). Serine 892 is subject to Phosphoserine. Threonine 894 bears the Phosphothreonine mark. A phosphoserine mark is found at serine 903, serine 914, serine 925, serine 936, serine 945, serine 1003, serine 1009, serine 1024, and serine 1025. Threonine 1040 is modified (phosphothreonine). Disordered regions lie at residues 1047-1084 (ISAHGQKHRAVPAPSPGPTHNSPELGRPPAAGVLAPDM) and 1143-1165 (EEASSPGAGEGPAEEGTRDSKVG). Serine 1048, serine 1068, and serine 1147 each carry phosphoserine.

Belongs to the FAM83 family. Directly interacts (via DUF1669) with casein kinase isoforms CSNK1A1, CSNK1A1L, CSNK1D and CSNK1E. Interaction with CSNK1A1 recruits CSNK1A1 to keratin filaments. Interacts with KRT18 and probably other keratins. As to expression, expressed in the tooth follicle.

Its subcellular location is the cytoplasm. The protein resides in the cytoskeleton. Functionally, may play a major role in the structural organization and calcification of developing enamel. May play a role in keratin cytoskeleton disassembly by recruiting CSNK1A1 to keratin filaments. Thereby, it may regulate epithelial cell migration. The protein is Protein FAM83H of Homo sapiens (Human).